Reading from the N-terminus, the 403-residue chain is Chalcone synthase 3 (403 aa).

Residue Cys170 is part of the active site.

This sequence belongs to the thiolase-like superfamily. Chalcone/stilbene synthases family.

It catalyses the reaction (E)-4-coumaroyl-CoA + 3 malonyl-CoA + 3 H(+) = 2',4,4',6'-tetrahydroxychalcone + 3 CO2 + 4 CoA. It functions in the pathway secondary metabolite biosynthesis; flavonoid biosynthesis. Its function is as follows. The primary product of this enzyme is 4,2',4',6'-tetrahydroxychalcone (also termed naringenin-chalcone or chalcone) which can under specific conditions spontaneously isomerize into naringenin. This chain is Chalcone synthase 3 (CHS3), found in Gerbera hybrida (Daisy).